A 245-amino-acid chain; its full sequence is Eukaryotic translation initiation factor 6-2 (245 aa).

The protein belongs to the eIF-6 family. As to quaternary structure, monomer. Associates with the 60S ribosomal subunit.

The protein resides in the cytoplasm. It localises to the nucleus. It is found in the nucleolus. In terms of biological role, binds to the 60S ribosomal subunit and prevents its association with the 40S ribosomal subunit to form the 80S initiation complex in the cytoplasm. May also be involved in ribosome biogenesis. This Arabidopsis thaliana (Mouse-ear cress) protein is Eukaryotic translation initiation factor 6-2.